The following is a 103-amino-acid chain: Sec-independent protein translocase protein TatA (103 aa).

Residues 1-21 traverse the membrane as a helical segment; sequence MGNIFSPTHLIIILLLILLLF. The interval 48–103 is disordered; the sequence is EESIEDKVEMADTSQVINEESQQSQPLSVKRAAIRRKASSDSKGGKASIAKKQRVK. Residues 59 to 74 show a composition bias toward polar residues; it reads DTSQVINEESQQSQPL.

Belongs to the TatA/E family. As to quaternary structure, the Tat system comprises two distinct complexes: a TatABC complex, containing multiple copies of TatA, TatB and TatC subunits, and a separate TatA complex, containing only TatA subunits. Substrates initially bind to the TatABC complex, which probably triggers association of the separate TatA complex to form the active translocon.

The protein resides in the cell inner membrane. Its function is as follows. Part of the twin-arginine translocation (Tat) system that transports large folded proteins containing a characteristic twin-arginine motif in their signal peptide across membranes. TatA could form the protein-conducting channel of the Tat system. The chain is Sec-independent protein translocase protein TatA from Bartonella tribocorum (strain CIP 105476 / IBS 506).